Here is a 500-residue protein sequence, read N- to C-terminus: Probable malate:quinone oxidoreductase (500 aa).

This sequence belongs to the MQO family. FAD serves as cofactor.

It carries out the reaction (S)-malate + a quinone = a quinol + oxaloacetate. It functions in the pathway carbohydrate metabolism; tricarboxylic acid cycle; oxaloacetate from (S)-malate (quinone route): step 1/1. This is Probable malate:quinone oxidoreductase from Bacillus anthracis (strain A0248).